The sequence spans 214 residues: Thiamine-phosphate synthase (214 aa).

4-amino-2-methyl-5-(diphosphooxymethyl)pyrimidine contacts are provided by residues 37-41 and Asn-73; that span reads QYREK. Mg(2+) contacts are provided by Asp-74 and Asp-93. Ser-112 lines the 4-amino-2-methyl-5-(diphosphooxymethyl)pyrimidine pocket. Residue 139 to 141 coordinates 2-[(2R,5Z)-2-carboxy-4-methylthiazol-5(2H)-ylidene]ethyl phosphate; it reads TIS. Lys-142 contacts 4-amino-2-methyl-5-(diphosphooxymethyl)pyrimidine. Residues Gly-171 and 191–192 each bind 2-[(2R,5Z)-2-carboxy-4-methylthiazol-5(2H)-ylidene]ethyl phosphate; that span reads IS.

It belongs to the thiamine-phosphate synthase family. Mg(2+) is required as a cofactor.

It catalyses the reaction 2-[(2R,5Z)-2-carboxy-4-methylthiazol-5(2H)-ylidene]ethyl phosphate + 4-amino-2-methyl-5-(diphosphooxymethyl)pyrimidine + 2 H(+) = thiamine phosphate + CO2 + diphosphate. The enzyme catalyses 2-(2-carboxy-4-methylthiazol-5-yl)ethyl phosphate + 4-amino-2-methyl-5-(diphosphooxymethyl)pyrimidine + 2 H(+) = thiamine phosphate + CO2 + diphosphate. It carries out the reaction 4-methyl-5-(2-phosphooxyethyl)-thiazole + 4-amino-2-methyl-5-(diphosphooxymethyl)pyrimidine + H(+) = thiamine phosphate + diphosphate. It participates in cofactor biosynthesis; thiamine diphosphate biosynthesis; thiamine phosphate from 4-amino-2-methyl-5-diphosphomethylpyrimidine and 4-methyl-5-(2-phosphoethyl)-thiazole: step 1/1. Its function is as follows. Condenses 4-methyl-5-(beta-hydroxyethyl)thiazole monophosphate (THZ-P) and 2-methyl-4-amino-5-hydroxymethyl pyrimidine pyrophosphate (HMP-PP) to form thiamine monophosphate (TMP). The chain is Thiamine-phosphate synthase from Listeria monocytogenes serovar 1/2a (strain ATCC BAA-679 / EGD-e).